Consider the following 991-residue polypeptide: Toll-like receptor 13 (991 aa).

The N-terminal stretch at 1 to 68 is a signal peptide; it reads MSGLYRILVQ…GFSLPPVAET (68 aa). At 69–783 the chain is on the extracellular side; the sequence is YGFNKCTQYE…DAMCNFDLGK (715 aa). 3 N-linked (GlcNAc...) asparagine glycosylation sites follow: N93, N109, and N125. LRR repeat units follow at residues 104–125, 128–149, 152–174, 175–196, 199–220, 225–246, 248–268, 271–292, 295–315, 318–338, 348–368, 372–394, 397–418, 421–442, 445–466, 469–490, 493–514, 517–538, 541–562, 565–585, 594–617, 620–641, 644–665, 672–693, and 696–716; these read YTTH…SFTN, ALVD…AFRG, NLTL…EGLS, SLKT…AFTP, KLKY…LEAV, CLER…PRSL, SLTH…SALS, NLTN…YLKT, QLKS…SAKH, NLRA…DMKT, KLET…KQLA, RLLF…EFNA, SLQK…TWSS, NLTS…AFSP, HLEF…AFSG, ALKE…SFTQ, NLEV…TFRP, KLQS…SFSG, NLRS…LFSG, KLLI…RTLQ, SLKQ…FFQG, SLQE…QFDP, NLTK…LNAS, RLKI…MFSS, and SLQV…SHLK. N-linked (GlcNAc...) asparagine glycosylation is found at N152 and N167. N-linked (GlcNAc...) asparagine glycosylation is found at N209, N233, N263, N271, N274, N300, and N310. N-linked (GlcNAc...) asparagine glycans are attached at residues N357, N388, N413, and N421. N-linked (GlcNAc...) asparagine glycosylation is found at N644 and N663. Residues N711 and N742 are each glycosylated (N-linked (GlcNAc...) asparagine). The region spanning 729-779 is the LRRCT domain; the sequence is NKLQCTCDNLWFKNWSMNTEEVHIPFLRSYPCQQPGSQSLLIDFDDAMCNF. A helical transmembrane segment spans residues 784–804; sequence VYFLCSFSMVLSTMVFSWFST. Topologically, residues 805-991 are cytoplasmic; it reads KMIASLWYGL…KENTHLIVVE (187 aa). Residues 832 to 975 form the TIR domain; it reads FLYDAFVSFS…LFWARIRNAL (144 aa).

Belongs to the Toll-like receptor family. As to quaternary structure, binds MYD88 via their respective TIR domains. Interacts with UNC93B1.

It localises to the endosome membrane. Component of innate and adaptive immunity that recognizes and binds 23S rRNA from bacteria. TLRs (Toll-like receptors) control host immune response against pathogens through recognition of molecular patterns specific to microorganisms. Acts via MYD88 and TRAF6, leading to NF-kappa-B activation, cytokine secretion and the inflammatory response. Specifically binds the 5'-CGGAAAGACC-3' sequence on bacterial 23S rRNA, a sequence also bound by MLS group antibiotics (including erythromycin). May also recognize vesicular stomatitis virus; however, these data require additional evidences. The sequence is that of Toll-like receptor 13 (Tlr13) from Mus musculus (Mouse).